The following is an 83-amino-acid chain: Putative membrane protein insertion efficiency factor (83 aa).

A disordered region spans residues 63–83 (GGNDPVPDHFSLRRNKTDISD). Residues 68–83 (VPDHFSLRRNKTDISD) are compositionally biased toward basic and acidic residues.

This sequence belongs to the UPF0161 family.

The protein resides in the cell membrane. In terms of biological role, could be involved in insertion of integral membrane proteins into the membrane. The chain is Putative membrane protein insertion efficiency factor from Streptococcus agalactiae serotype Ia (strain ATCC 27591 / A909 / CDC SS700).